Reading from the N-terminus, the 366-residue chain is Ribosomal RNA large subunit methyltransferase M (366 aa).

S-adenosyl-L-methionine is bound by residues Ser188, 221–224 (CPGG), Asp240, Asp260, and Asp277. The active-site Proton acceptor is Lys306.

The protein belongs to the class I-like SAM-binding methyltransferase superfamily. RNA methyltransferase RlmE family. RlmM subfamily. As to quaternary structure, monomer.

It localises to the cytoplasm. The catalysed reaction is cytidine(2498) in 23S rRNA + S-adenosyl-L-methionine = 2'-O-methylcytidine(2498) in 23S rRNA + S-adenosyl-L-homocysteine + H(+). Its function is as follows. Catalyzes the 2'-O-methylation at nucleotide C2498 in 23S rRNA. This Klebsiella pneumoniae subsp. pneumoniae (strain ATCC 700721 / MGH 78578) protein is Ribosomal RNA large subunit methyltransferase M.